Here is a 470-residue protein sequence, read N- to C-terminus: Probable citrate synthase, mitochondrial (470 aa).

Catalysis depends on residues His297, His351, and Asp406.

Belongs to the citrate synthase family. In terms of assembly, homodimer.

Its subcellular location is the mitochondrion matrix. It catalyses the reaction oxaloacetate + acetyl-CoA + H2O = citrate + CoA + H(+). The protein operates within carbohydrate metabolism; tricarboxylic acid cycle; isocitrate from oxaloacetate: step 1/2. The polypeptide is Probable citrate synthase, mitochondrial (Leishmania braziliensis).